The following is a 190-amino-acid chain: Prostaglandin-H2 D-isomerase (190 aa).

Residues 1–22 (MATHHTLWMGLALLGVLGDLQA) form the signal peptide. A glycan (N-linked (GlcNAc...) asparagine) is linked at Asn51. The active-site Nucleophile is Cys65. N-linked (GlcNAc...) asparagine glycosylation occurs at Asn78. Cysteines 89 and 186 form a disulfide.

This sequence belongs to the calycin superfamily. Lipocalin family. As to quaternary structure, monomer.

The protein resides in the rough endoplasmic reticulum. It localises to the nucleus membrane. It is found in the golgi apparatus. Its subcellular location is the cytoplasm. The protein localises to the perinuclear region. The protein resides in the secreted. It catalyses the reaction prostaglandin H2 = prostaglandin D2. Catalyzes the conversion of PGH2 to PGD2, a prostaglandin involved in smooth muscle contraction/relaxation and a potent inhibitor of platelet aggregation. Involved in a variety of CNS functions, such as sedation, NREM sleep and PGE2-induced allodynia, and may have an anti-apoptotic role in oligodendrocytes. Binds small non-substrate lipophilic molecules, including biliverdin, bilirubin, retinal, retinoic acid and thyroid hormone, and may act as a scavenger for harmful hydrophobic molecules and as a secretory retinoid and thyroid hormone transporter. Possibly involved in development and maintenance of the blood-brain, blood-retina, blood-aqueous humor and blood-testis barrier. It is likely to play important roles in both maturation and maintenance of the central nervous system and male reproductive system. Involved in PLA2G3-dependent maturation of mast cells. PLA2G3 is secreted by immature mast cells and acts on nearby fibroblasts upstream to PTDGS to synthesize PGD2, which in turn promotes mast cell maturation and degranulation via PTGDR. The polypeptide is Prostaglandin-H2 D-isomerase (PTGDS) (Gorilla gorilla gorilla (Western lowland gorilla)).